The chain runs to 255 residues: 1-(5-phosphoribosyl)-5-[(5-phosphoribosylamino)methylideneamino] imidazole-4-carboxamide isomerase (255 aa).

The Proton acceptor role is filled by D8. D129 functions as the Proton donor in the catalytic mechanism.

It belongs to the HisA/HisF family.

The protein resides in the cytoplasm. The enzyme catalyses 1-(5-phospho-beta-D-ribosyl)-5-[(5-phospho-beta-D-ribosylamino)methylideneamino]imidazole-4-carboxamide = 5-[(5-phospho-1-deoxy-D-ribulos-1-ylimino)methylamino]-1-(5-phospho-beta-D-ribosyl)imidazole-4-carboxamide. The protein operates within amino-acid biosynthesis; L-histidine biosynthesis; L-histidine from 5-phospho-alpha-D-ribose 1-diphosphate: step 4/9. In Prochlorococcus marinus (strain MIT 9312), this protein is 1-(5-phosphoribosyl)-5-[(5-phosphoribosylamino)methylideneamino] imidazole-4-carboxamide isomerase.